Here is a 565-residue protein sequence, read N- to C-terminus: DNA mismatch repair protein MutL (565 aa).

It belongs to the DNA mismatch repair MutL/HexB family.

This protein is involved in the repair of mismatches in DNA. It is required for dam-dependent methyl-directed DNA mismatch repair. May act as a 'molecular matchmaker', a protein that promotes the formation of a stable complex between two or more DNA-binding proteins in an ATP-dependent manner without itself being part of a final effector complex. The chain is DNA mismatch repair protein MutL from Desulforudis audaxviator (strain MP104C).